Reading from the N-terminus, the 219-residue chain is MGRRPARCYRYCKNKPYPKSRFCRGVPDPKIRIFDLGKKRANVDDFPLCVHLVSDEYEQLSSEALEAGRICCNKYLVKNCGKDQFHIRMRLHPFHVIRINKMLSCAGADRLQTGMRGAFGKPQGTVARVRIGQPIMSVRSSDRWKAQVIEALRRAKFKFPGRQKIYVSKKWGFTKYERDEFEKLREEGRLANDGCIVQYRPEHGPLDAWRKVQAEILNV.

It belongs to the universal ribosomal protein uL16 family. As to quaternary structure, component of the large ribosomal subunit. Mature ribosomes consist of a small (40S) and a large (60S) subunit. The 40S subunit contains about 33 different proteins and 1 molecule of RNA (18S). The 60S subunit contains about 49 different proteins and 3 molecules of RNA (28S, 5.8S and 5S).

The polypeptide is Large ribosomal subunit protein uL16 (RpL10) (Bombyx mandarina (Wild silk moth)).